Here is a 472-residue protein sequence, read N- to C-terminus: Nuclear receptor subfamily 0 group B member 1 (472 aa).

Tandem repeats lie at residues 1 to 67 (MAGE…YRCC), 68 to 135 (FCGE…YRCC), and 136 to 202 (FCGK…YRSY). The segment at 1-255 (MAGEDHPWHG…RPIALKDPQV (255 aa)) is 4 X 67 AA tandem repeats. 3 consecutive short sequence motifs (LXXLL motif) follow at residues 13 to 17 (LYNLL), 80 to 84 (LYSML), and 148 to 152 (LYSLL). An NR LBD domain is found at 190 to 471 (QSTQAMAFLY…DMMLEMLCAK (282 aa)). Residues 203–255 (VCCEEQPQQSSVASDTPVRADQTPAAPQEQPRAPWWDTSSGVQRPIALKDPQV) form a 4; truncated repeat. 2 disordered regions span residues 214–237 (VASD…RAPW) and 326–345 (RRQE…EQPQ). The AF-2 motif motif lies at 463–468 (MMLEML).

It belongs to the nuclear hormone receptor family. NR0 subfamily. Homodimer. Interacts with NR5A1, NR5A2, NR0B2 and with COPS2. Interacts with ESRRB; represses ESRRB activity at the GATA6 promoter.

The protein resides in the nucleus. It is found in the cytoplasm. Functionally, nuclear receptor that lacks a DNA-binding domain and acts as a corepressor that inhibits the transcriptional activity of other nuclear receptors through heterodimeric interactions. Component of a cascade required for the development of the hypothalamic-pituitary-adrenal-gonadal axis. May also have a role in the development of the embryo and in the maintenance of embryonic stem cell pluripotency. The chain is Nuclear receptor subfamily 0 group B member 1 (Nr0b1) from Rattus norvegicus (Rat).